The sequence spans 568 residues: Natural resistance-associated macrophage protein 2 (568 aa).

Residues 1-40 (MVLGPEQKMSDDSVSGDHGESASLGNINPAYSNPSLSQSP) form a disordered region. At 1 to 69 (MVLGPEQKMS…EEYSCFSFRK (69 aa)) the chain is on the cytoplasmic side. A compositionally biased stretch (basic and acidic residues) spans 8 to 20 (KMSDDSVSGDHGE). Positions 23–40 (SLGNINPAYSNPSLSQSP) are enriched in polar residues. Residues 70–90 (LWAFTGPGFLMSIAYLDPGNI) traverse the membrane as a helical segment. At 91–96 (ESDLQS) the chain is on the extracellular side. Residues 97 to 117 (GAVAGFKLLWILLLATLVGLL) traverse the membrane as a helical segment. The Cytoplasmic segment spans residues 118-154 (LQRLAARLGVVTGLHLAEVCHRQYPKVPRVILWLMVE). The helical transmembrane segment at 155–175 (LAIIGSDMQEVIGSAIAINLL) threads the bilayer. Residues 176–179 (SVGR) lie on the Extracellular side of the membrane. A helical membrane pass occupies residues 180–200 (IPLWGGVLITIADTFVFLFLD). Residues 201 to 208 (KYGLRKLE) lie on the Cytoplasmic side of the membrane. The helical transmembrane segment at 209–229 (AFFGFLITIMALTFGYEYVTV) threads the bilayer. Topologically, residues 230–255 (KPSQSQVLKGMFVPSCSGCRTPQIEQ) are extracellular. A helical transmembrane segment spans residues 256–276 (AVGIVGAVIMPHNMYLHSALV). Topologically, residues 277 to 301 (KSRQVNRNNKQEVREANKYFFIESC) are cytoplasmic. A helical membrane pass occupies residues 302-322 (IALFVSFIINVFVVSVFAEAF). Residues 323 to 360 (FGKTNEQVVEVCTNTSSPHAGLFPKDNSTLAVDIYKGG) are Extracellular-facing. Asparagine 336 and asparagine 349 each carry an N-linked (GlcNAc...) asparagine glycan. Residues 361-381 (VVLGCYFGPAALYIWAVGILA) form a helical membrane-spanning segment. Residues 382–408 (AGQSSTMTGTYSGQFVMEGFLNLKWSR) lie on the Cytoplasmic side of the membrane. The helical transmembrane segment at 409–429 (FARVVLTRSIAIIPTLLVAVF) threads the bilayer. Residues 430 to 440 (QDVEHLTGMND) are Extracellular-facing. The chain crosses the membrane as a helical span at residues 441 to 461 (FLNVLQSLQLPFALIPILTFT). Over 462–482 (SLRPVMSDFANGLGWRIAGGI) the chain is Cytoplasmic. Residues 483–503 (LVLIICSINMYFVVVYVRDLG) traverse the membrane as a helical segment. Residues 504–506 (HVA) lie on the Extracellular side of the membrane. Residues 507–527 (LYVVAAVVSVAYLGFVFYLGW) form a helical membrane-spanning segment. Residues 528–568 (QCLIALGMSFLDCGHTCHLGLTAQPELYLLNTMDADSLVSR) lie on the Cytoplasmic side of the membrane. The segment at 555–559 (YLLNT) is required for early endosome targeting. A phosphoserine mark is found at serine 564 and serine 567.

This sequence belongs to the NRAMP family. As to quaternary structure, forms a complex with NDFIP1 and NEDD4L, in cortical neurons, in response to iron and cobalt exposure; this interaction leads to SLC11A2 ubiquitination by NEDD4L and proteasome-dependent degradation. Interacts with NDFIP1, NDFIP2 and WWP2; this interaction leads to SLC11A2 ubiquitination by WWP2 and subsequent proteasome-dependent degradation. Interacts with COX2 and TOM6 at the outer mitochondrion membrane. Interacts with ARRDC1; this interaction regulates the incorporation of SLC11A2 into extracellular vesicles through an ubiquitination-dependent mechanism. Interacts with ARRDC4; controls the incorporation of SLC11A2 into extracellular vesicles through an ubiquitination-dependent mechanism. Post-translationally, ubiquitinated by WWP2. In terms of processing, N-glycosylated. In terms of tissue distribution, ubiquitously expressed. Expressed in erythroid progenitors.

It localises to the early endosome membrane. The protein resides in the apical cell membrane. It is found in the late endosome membrane. Its subcellular location is the lysosome membrane. The protein localises to the cell membrane. It localises to the extracellular vesicle membrane. The protein resides in the mitochondrion outer membrane. It is found in the golgi apparatus. Its subcellular location is the trans-Golgi network membrane. The protein localises to the recycling endosome membrane. The enzyme catalyses Fe(2+)(in) + H(+)(in) = Fe(2+)(out) + H(+)(out). It catalyses the reaction Co(2+)(out) + H(+)(out) = Co(2+)(in) + H(+)(in). It carries out the reaction Cd(2+)(out) + H(+)(out) = Cd(2+)(in) + H(+)(in). The catalysed reaction is Mn(2+)(in) + H(+)(in) = Mn(2+)(out) + H(+)(out). The enzyme catalyses Zn(2+)(out) + H(+)(out) = Zn(2+)(in) + H(+)(in). It catalyses the reaction Ni(2+)(out) + H(+)(out) = Ni(2+)(in) + H(+)(in). It carries out the reaction H(+)(in) = H(+)(out). The catalysed reaction is Fe(2+)(in) = Fe(2+)(out). In terms of biological role, proton-coupled metal ion symporter operating with a proton to metal ion stoichiometry of 1:1. Selectively transports various divalent metal cations, in decreasing affinity: Cd(2+) &gt; Fe(2+) &gt; Co(2+), Mn(2+) &gt;&gt; Zn(2+), Ni(2+), VO(2+). Essential for maintenance of iron homeostasis by modulating intestinal absorption of dietary Fe(2+) and TF-associated endosomal Fe(2+) transport in erythroid precursors and other cells. Enables Fe(2+) and Mn(2+) ion entry into mitochondria, and is thus expected to promote mitochondrial heme synthesis, iron-sulfur cluster biogenesis and antioxidant defense. Can mediate uncoupled fluxes of either protons or metal ions. This is Natural resistance-associated macrophage protein 2 (SLC11A2) from Homo sapiens (Human).